The following is a 671-amino-acid chain: Spartin (671 aa).

N-acetylmethionine is present on Met1. In terms of domain architecture, MIT spans 16 to 94 (IKEAYEKAFM…LQNVRTRLEI (79 aa)). The disordered stretch occupies residues 110 to 175 (VPKLYPEFPP…CPAEAPPAYS (66 aa)). Basic and acidic residues predominate over residues 118–128 (PPKDACKKSPE). Position 126 is a phosphoserine (Ser126). The segment covering 143–158 (GSASAACAGPSGAPSA) has biased composition (low complexity). Over residues 159–174 (LPVPSPSCPAEAPPAY) the composition is skewed to pro residues. A ubiquitin-binding region (UBR) domain region spans residues 190–385 (DSGEFSSVGE…SIDQGSKDAR (196 aa)). An LC3-interacting region (LIR); mediates interaction with MAP1LC3A AND MAP1LC3C motif is present at residues 193–200 (EFSSVGED). Residues 346 to 421 (FQIPGRSSHP…SSEEKSKELP (76 aa)) are disordered. Residue Lys360 forms a Glycyl lysine isopeptide (Lys-Gly) (interchain with G-Cter in ubiquitin) linkage. Over residues 369–379 (QSSSSGSSIDQ) the composition is skewed to low complexity. Over residues 384-393 (ARHKGKRGKK) the composition is skewed to basic residues. The Senescence domain maps to 431-615 (ILSGASWVSW…YNIDNIGIKA (185 aa)). The tract at residues 435–507 (ASWVSWGLVK…LVDGVCTVAN (73 aa)) is required for localization to lipid droplets. Ser474 is modified (phosphoserine). The interval 635-671 (VERPQRESQGGATSTEGRRDIGKQVEEEKPGAGKKDK) is disordered. Residues 650 to 671 (EGRRDIGKQVEEEKPGAGKKDK) are compositionally biased toward basic and acidic residues.

As to quaternary structure, interacts with ITCH and WWP1. Interacts (via MIT domain) with IST1; leading to the recruitment of SPART to midbodies. Interacts with MAP1LC3A and MAP1LC3C. Ubiquitinated; ubiquitination does not require ITCH and WWP1. In terms of tissue distribution, brain (at protein level).

The protein resides in the cytoplasm. It localises to the midbody. The protein localises to the lipid droplet. Its function is as follows. Lipophagy receptor that plays an important role in lipid droplet (LD) turnover in motor neurons. Localizes to LDs and interacts with components of the autophagy machinery, such as MAP1LC3A/C proteins to deliver LDs to autophagosomes for degradation via lipophagy. Lipid transfer protein required for lipid droplet degradation, including by lipophagy. Can bind and transfer all lipid species found in lipid droplets, from phospholipids to triglycerides and sterol esters but the direction of lipid transfer by spartin and its cargos are unknown. May be implicated in endosomal trafficking, or microtubule dynamics, or both. Participates in cytokinesis. In Mus musculus (Mouse), this protein is Spartin.